The following is a 63-amino-acid chain: Cytochrome c oxidase subunit 7C, mitochondrial (63 aa).

Residues 1–16 (MLGHSIRRFTTSVVRR) constitute a mitochondrion transit peptide. The Mitochondrial matrix segment spans residues 17–33 (SHYEEGPGKNLPFSVKN). An N6-acetyllysine; alternate modification is found at lysine 25. Lysine 25 carries the N6-succinyllysine; alternate modification. A helical transmembrane segment spans residues 34–60 (KWALLVKMSLYFGSAFATPFLIVRHQL). At 61–63 (LKQ) the chain is on the mitochondrial intermembrane side.

Belongs to the cytochrome c oxidase VIIc family. In terms of assembly, component of the cytochrome c oxidase (complex IV, CIV), a multisubunit enzyme composed of 14 subunits. The complex is composed of a catalytic core of 3 subunits MT-CO1, MT-CO2 and MT-CO3, encoded in the mitochondrial DNA, and 11 supernumerary subunits COX4I, COX5A, COX5B, COX6A, COX6B, COX6C, COX7A, COX7B, COX7C, COX8 and NDUFA4, which are encoded in the nuclear genome. The complex exists as a monomer or a dimer and forms supercomplexes (SCs) in the inner mitochondrial membrane with NADH-ubiquinone oxidoreductase (complex I, CI) and ubiquinol-cytochrome c oxidoreductase (cytochrome b-c1 complex, complex III, CIII), resulting in different assemblies (supercomplex SCI(1)III(2)IV(1) and megacomplex MCI(2)III(2)IV(2)). Interacts with RAB5IF.

It is found in the mitochondrion inner membrane. It participates in energy metabolism; oxidative phosphorylation. Its function is as follows. Component of the cytochrome c oxidase, the last enzyme in the mitochondrial electron transport chain which drives oxidative phosphorylation. The respiratory chain contains 3 multisubunit complexes succinate dehydrogenase (complex II, CII), ubiquinol-cytochrome c oxidoreductase (cytochrome b-c1 complex, complex III, CIII) and cytochrome c oxidase (complex IV, CIV), that cooperate to transfer electrons derived from NADH and succinate to molecular oxygen, creating an electrochemical gradient over the inner membrane that drives transmembrane transport and the ATP synthase. Cytochrome c oxidase is the component of the respiratory chain that catalyzes the reduction of oxygen to water. Electrons originating from reduced cytochrome c in the intermembrane space (IMS) are transferred via the dinuclear copper A center (CU(A)) of subunit 2 and heme A of subunit 1 to the active site in subunit 1, a binuclear center (BNC) formed by heme A3 and copper B (CU(B)). The BNC reduces molecular oxygen to 2 water molecules using 4 electrons from cytochrome c in the IMS and 4 protons from the mitochondrial matrix. The protein is Cytochrome c oxidase subunit 7C, mitochondrial (COX7C) of Papio hamadryas (Hamadryas baboon).